A 591-amino-acid chain; its full sequence is Aspartate--tRNA(Asp/Asn) ligase (591 aa).

Position 176 (E176) interacts with L-aspartate. Residues 200–203 form an aspartate region; it reads QLFK. L-aspartate is bound at residue R222. ATP is bound by residues 222 to 224 and Q231; that span reads RDE. Residue H450 participates in L-aspartate binding. An ATP-binding site is contributed by E484. R491 lines the L-aspartate pocket. Position 536–539 (536–539) interacts with ATP; that stretch reads GLDR.

This sequence belongs to the class-II aminoacyl-tRNA synthetase family. Type 1 subfamily. Homodimer.

The protein localises to the cytoplasm. The enzyme catalyses tRNA(Asx) + L-aspartate + ATP = L-aspartyl-tRNA(Asx) + AMP + diphosphate. In terms of biological role, aspartyl-tRNA synthetase with relaxed tRNA specificity since it is able to aspartylate not only its cognate tRNA(Asp) but also tRNA(Asn). Reaction proceeds in two steps: L-aspartate is first activated by ATP to form Asp-AMP and then transferred to the acceptor end of tRNA(Asp/Asn). In Bacillus anthracis (strain A0248), this protein is Aspartate--tRNA(Asp/Asn) ligase.